The following is a 21-amino-acid chain: Complement receptor 3-related protein (21 aa).

Its subcellular location is the secreted. Plays a role in adherence of C.albicans to buccal epithelial cells, and in biofilm formation. The sequence is that of Complement receptor 3-related protein from Candida albicans (Yeast).